Reading from the N-terminus, the 214-residue chain is Probable transaldolase (214 aa).

Catalysis depends on K83, which acts as the Schiff-base intermediate with substrate.

This sequence belongs to the transaldolase family. Type 3B subfamily.

It is found in the cytoplasm. The enzyme catalyses D-sedoheptulose 7-phosphate + D-glyceraldehyde 3-phosphate = D-erythrose 4-phosphate + beta-D-fructose 6-phosphate. It functions in the pathway carbohydrate degradation; pentose phosphate pathway; D-glyceraldehyde 3-phosphate and beta-D-fructose 6-phosphate from D-ribose 5-phosphate and D-xylulose 5-phosphate (non-oxidative stage): step 2/3. Functionally, transaldolase is important for the balance of metabolites in the pentose-phosphate pathway. This is Probable transaldolase from Maridesulfovibrio salexigens (strain ATCC 14822 / DSM 2638 / NCIMB 8403 / VKM B-1763) (Desulfovibrio salexigens).